The sequence spans 155 residues: Small ribosomal subunit protein uS7cz/uS7cy (155 aa).

The protein belongs to the universal ribosomal protein uS7 family. As to quaternary structure, part of the 30S ribosomal subunit.

It is found in the plastid. The protein resides in the chloroplast. One of the primary rRNA binding proteins, it binds directly to 16S rRNA where it nucleates assembly of the head domain of the 30S subunit. This is Small ribosomal subunit protein uS7cz/uS7cy (rps7-A) from Lemna minor (Common duckweed).